A 508-amino-acid chain; its full sequence is Photosystem II CP47 reaction center protein (508 aa).

The next 6 membrane-spanning stretches (helical) occupy residues 21–36 (AVHI…WAGS), 101–115 (ILFS…IWHW), 140–156 (GIHL…FGAF), 203–218 (IAAG…FHLS), 237–252 (VLSS…AFVV), and 457–472 (SFAL…HGAR).

Belongs to the PsbB/PsbC family. PsbB subfamily. PSII is composed of 1 copy each of membrane proteins PsbA, PsbB, PsbC, PsbD, PsbE, PsbF, PsbH, PsbI, PsbJ, PsbK, PsbL, PsbM, PsbT, PsbX, PsbY, PsbZ, Psb30/Ycf12, at least 3 peripheral proteins of the oxygen-evolving complex and a large number of cofactors. It forms dimeric complexes. Requires Binds multiple chlorophylls. PSII binds additional chlorophylls, carotenoids and specific lipids. as cofactor.

It localises to the plastid. Its subcellular location is the chloroplast thylakoid membrane. One of the components of the core complex of photosystem II (PSII). It binds chlorophyll and helps catalyze the primary light-induced photochemical processes of PSII. PSII is a light-driven water:plastoquinone oxidoreductase, using light energy to abstract electrons from H(2)O, generating O(2) and a proton gradient subsequently used for ATP formation. In Oenothera argillicola (Appalachian evening primrose), this protein is Photosystem II CP47 reaction center protein.